Here is a 147-residue protein sequence, read N- to C-terminus: Protein phosphatase 1 regulatory subunit 14A (147 aa).

Residues M1–L11 are compositionally biased toward basic residues. The tract at residues M1 to R36 is disordered. Residue S26 is modified to Phosphoserine. The tract at residues A35–K120 is inhibitory. A Phosphothreonine; by PKC modification is found at T38. Residues L118–P147 form a disordered region. S128, S134, and S136 each carry phosphoserine. Residues R138–P147 are compositionally biased toward basic and acidic residues.

It belongs to the PP1 inhibitor family.

It is found in the cytoplasm. Inhibitor of PPP1CA. Has over 1000-fold higher inhibitory activity when phosphorylated, creating a molecular switch for regulating the phosphorylation status of PPP1CA substrates and smooth muscle contraction. This Mus musculus (Mouse) protein is Protein phosphatase 1 regulatory subunit 14A (Ppp1r14a).